The primary structure comprises 240 residues: Inhibitor of growth protein 5 (240 aa).

The residue at position 114 (K114) is an N6-acetyllysine. Residues 116–165 (EGSDFESSGGRGLKKGRGQKEKRGSRGRGRRTSEEDTPKKKKHKGGSEFT) form a disordered region. S118 is modified (phosphoserine). At R126 the chain carries Omega-N-methylarginine. Residues 186 to 235 (PTYCLCHQVSYGEMIGCDNPDCPIEWFHFACVDLTTKPKGKWFCPRCVQE) form a PHD-type zinc finger. 8 residues coordinate Zn(2+): C189, C191, C202, C207, H213, C216, C229, and C232.

It belongs to the ING family. Component of the HBO1 complex composed of KAT7/HBO1, MEAF6, ING5, and one scaffold subunit: complexes containing BRPF scaffold (BRPF1, BRD1/BRPF2 or BRPF3) direct KAT7/HBO1 specificity towards H3K14ac, while complexes containing JADE scaffold (JADE1, JADE2 and JADE3) mediate acetylation of histone H4. Component of the MOZ/MORF complex composed at least of ING5, KAT6A, KAT6B, MEAF6 and one of BRPF1, BRD1/BRPF2 and BRPF3. Interacts with H3K4me3 and to a lesser extent with H3K4me2. Interacts with EP300 and p53/TP53. Interacts with INCA1. Down-regulated in bone marrow cells in acute myeloid leukemia patients as compared with normal bone marrow cells.

The protein localises to the nucleus. It localises to the chromosome. Functionally, component of the HBO1 complex, which specifically mediates acetylation of histone H3 at 'Lys-14' (H3K14ac) and, to a lower extent, acetylation of histone H4. Component of the MOZ/MORF complex which has a histone H3 acetyltransferase activity. Through chromatin acetylation it may regulate DNA replication and may function as a transcriptional coactivator. Inhibits cell growth, induces a delay in S-phase progression and enhances Fas-induced apoptosis in an INCA1-dependent manner. This chain is Inhibitor of growth protein 5 (ING5), found in Homo sapiens (Human).